The sequence spans 338 residues: MIHKNWAELIKPQQLDVKPGNDPARQATVTAEPLERGFGLTMGNALRRVLMSSLQGAAITSVQIDNVLHEFSSVAGVREDVTDIILNLKGVSIRMEVEGPKRLSISAKGPGVVTAGDISESAGIEILNRDHVICHLDDGADVYMELTVNQGKGYVSAEKNKPEDAPIGLIPIDAIYSPVKKVSYDVQPTREGQVLDYDKLTMKVETDGSLTPDDAVAFAARILQDQLGIFVNFEEPESASRADEDDGLEFNPLLLKKVDDLELSVRSANCLKNDNIVYIGDLIQKTEAEMLRTPNFGRKSLNEIKEVLSGMGLHLGMDVEDWPPDNIEDLAKKFEDSF.

Residues 1–234 (MIHKNWAELI…DQLGIFVNFE (234 aa)) form an alpha N-terminal domain (alpha-NTD) region. An alpha C-terminal domain (alpha-CTD) region spans residues 250–338 (FNPLLLKKVD…DLAKKFEDSF (89 aa)).

This sequence belongs to the RNA polymerase alpha chain family. In terms of assembly, homodimer. The RNAP catalytic core consists of 2 alpha, 1 beta, 1 beta' and 1 omega subunit. When a sigma factor is associated with the core the holoenzyme is formed, which can initiate transcription.

It carries out the reaction RNA(n) + a ribonucleoside 5'-triphosphate = RNA(n+1) + diphosphate. Functionally, DNA-dependent RNA polymerase catalyzes the transcription of DNA into RNA using the four ribonucleoside triphosphates as substrates. The polypeptide is DNA-directed RNA polymerase subunit alpha (Roseobacter denitrificans (strain ATCC 33942 / OCh 114) (Erythrobacter sp. (strain OCh 114))).